A 634-amino-acid chain; its full sequence is Replication protein E1 (634 aa).

A Nuclear localization signal motif is present at residues 85–87; sequence KRK. Phosphoserine; by host is present on residues Ser-91 and Ser-95. Positions 92–117 are disordered; the sequence is PRSSPLGDITNQNNTHSHSQANESQV. Residues 100 to 115 are compositionally biased toward polar residues; that stretch reads ITNQNNTHSHSQANES. Residues 172–338 form a DNA-binding region region; that stretch reads CANVELNSIC…QTQLQHSFED (167 aa). The region spanning 437–587 is the SF3 helicase domain; sequence VNFMSFIQMF…FPFDNNGNAV (151 aa). 463 to 470 lines the ATP pocket; that stretch reads GPPNTGKS.

Belongs to the papillomaviridae E1 protein family. As to quaternary structure, can form hexamers. Interacts with E2 protein; this interaction increases E1 DNA binding specificity. Interacts with host DNA polymerase subunit POLA2. Interacts with host single stranded DNA-binding protein RPA1. Interacts with host TOP1; this interaction stimulates the enzymatic activity of TOP1. Phosphorylated.

Its subcellular location is the host nucleus. It catalyses the reaction Couples ATP hydrolysis with the unwinding of duplex DNA by translocating in the 3'-5' direction.. The catalysed reaction is ATP + H2O = ADP + phosphate + H(+). ATP-dependent DNA 3'-5' helicase required for initiation of viral DNA replication. It forms a complex with the viral E2 protein. The E1-E2 complex binds to the replication origin which contains binding sites for both proteins. During the initial step, a dimer of E1 interacts with a dimer of protein E2 leading to a complex that binds the viral origin of replication with high specificity. Then, a second dimer of E1 displaces the E2 dimer in an ATP-dependent manner to form the E1 tetramer. Following this, two E1 monomers are added to each half of the site, which results in the formation of two E1 trimers on the viral ori. Subsequently, two hexamers will be created. The double hexamer acts as a bi-directional helicase machinery and unwinds the viral DNA and then recruits the host DNA polymerase to start replication. The chain is Replication protein E1 from Homo sapiens (Human).